The following is a 420-amino-acid chain: WD repeat-containing protein 21 (420 aa).

Positions arginine 73–phenylalanine 75 match the DDB-boX motif. WD repeat units lie at residues glutamine 251–glutamine 289, histidine 293–arginine 332, and glycine 341–glutamate 383.

The protein localises to the cytoplasm. The protein resides in the nucleus. In Schizosaccharomyces pombe (strain 972 / ATCC 24843) (Fission yeast), this protein is WD repeat-containing protein 21 (wdr21).